The chain runs to 529 residues: MNNNDLVAKLWKLCDNLRDGGVSYQNYVNELASLLFLKMCKETGQEADYLPEGYRWDDLKSRIGQEQLQFYRNLLVHLGADEKKLVQAVFQNVNTTITQPKQLTELVSSMDSLDWYNGDHGKSRDDFGDMYEGLLQKNANETKSGAGQYFTPRPLIKTIIHLLKPQPREVVQDPAAGTAGFLIEADRYVKSQTNDLDDLDGDAQDFQIKKAFVGLELVPGTRRLALMNCLLHDIEGNLDHGGAIRLGNTLGSDGENLPQADIVATNPPFGSAAGTNITRTFVHPTSNKQLCFMQHIIETLPPGGRAAAVVPDNVLFEGGKGTDIRRDLMDKCHLHTILRLPTGIFYAQGVKTNVLFFTKGTVANPNQDKNCTDDVWVYDLRTNMPSFGKRTPFTEQHLQPFETVYGEDPHGLSPRTEGEWSFNAEESEVADSEENKNADQHQATSRWRKFSREWIRTAKSDSLDISWLKDKDSIDADSLPEPDVLAAEAMGELVQALGELDALMRELGAGDEADAQRQLLEEAFGGVKA.

S-adenosyl-L-methionine is bound by residues 148-153, 178-180, and E216; these read QYFTPR and TAG. The interval 424–443 is disordered; it reads AEESEVADSEENKNADQHQA.

Belongs to the N(4)/N(6)-methyltransferase family. In terms of assembly, the type I restriction/modification system is composed of three polypeptides R, M and S; the restriction enzyme has stoichiometry R(2)M(2)S(1) while the methyltransferase is M(2)S(1).

It carries out the reaction a 2'-deoxyadenosine in DNA + S-adenosyl-L-methionine = an N(6)-methyl-2'-deoxyadenosine in DNA + S-adenosyl-L-homocysteine + H(+). In terms of biological role, the subtype gamma methyltransferase (M) subunit of a type I restriction enzyme. The M and S subunits together form a methyltransferase (MTase) that methylates A-2 on the top strand and A-3 on the bottom strand of the sequence 5'-AACN(6)GTRC-3'. In the presence of the R subunit the complex can also act as an endonuclease, binding to the same target sequence but cutting the DNA some distance from this site. Whether the DNA is cut or modified depends on the methylation state of the target sequence. When the target site is unmodified, the DNA is cut. When the target site is hemimethylated, the complex acts as a maintenance MTase modifying the DNA so that both strands become methylated. After locating a non-methylated recognition site, the enzyme complex serves as a molecular motor that translocates DNA in an ATP-dependent manner until a collision occurs that triggers cleavage. In Salmonella potsdam, this protein is Type I restriction enzyme StySPI methylase subunit.